The chain runs to 731 residues: 1,4-alpha-glucan branching enzyme GlgB (731 aa).

The active-site Nucleophile is D409. The active-site Proton donor is E462.

Belongs to the glycosyl hydrolase 13 family. GlgB subfamily. In terms of assembly, monomer.

It carries out the reaction Transfers a segment of a (1-&gt;4)-alpha-D-glucan chain to a primary hydroxy group in a similar glucan chain.. It participates in glycan biosynthesis; glycogen biosynthesis. Functionally, catalyzes the formation of the alpha-1,6-glucosidic linkages in glycogen by scission of a 1,4-alpha-linked oligosaccharide from growing alpha-1,4-glucan chains and the subsequent attachment of the oligosaccharide to the alpha-1,6 position. This is 1,4-alpha-glucan branching enzyme GlgB (glgB) from Dickeya chrysanthemi (Pectobacterium chrysanthemi).